Consider the following 324-residue polypeptide: Phosphatidylinositol N-acetylglucosaminyltransferase GPI2 subunit (324 aa).

Topologically, residues 1-79 (MDEVCAAPAP…TDFWSLVADS (79 aa)) are cytoplasmic. A helical transmembrane segment spans residues 80–100 (LPVSQHLSSVVIFASVFVSIY). The Lumenal segment spans residues 101-107 (RNQLSCA). The helical transmembrane segment at 108 to 128 (LVGFVSNVSAVAAFILWDFVL) threads the bilayer. Over 129–140 (RKPCNNRTFPNY) the chain is Cytoplasmic. The helical transmembrane segment at 141–161 (MGIVKSCILIVLTLAGLSPIL) threads the bilayer. At 162–171 (MSLTKSTSPD) the chain is on the lumenal side. A helical membrane pass occupies residues 172 to 192 (SVWAIAVWLFLANVFFHEYTT). Residues 193–223 (ETIRPHVRLHNSLSTNAALSASVVLASRLEK) are Cytoplasmic-facing. A helical transmembrane segment spans residues 224–244 (SINVFFFILFAVHWFALFPIF). At 245-250 (RKYIHV) the chain is on the lumenal side. Residues 251-271 (FSFYADMLMTLVLIISAYIAL) form a helical membrane-spanning segment. The Cytoplasmic segment spans residues 272–276 (NAVAS). Residues 277–299 (VVIAFVFLSLIFFISFICPIWFI) form a helical membrane-spanning segment. Over 300–324 (KLQRFKNEIHGPWDIALPKLGPSKG) the chain is Lumenal.

Belongs to the PIGC family.

It localises to the endoplasmic reticulum membrane. It carries out the reaction a 1,2-diacyl-sn-glycero-3-phospho-(1D-myo-inositol) + UDP-N-acetyl-alpha-D-glucosamine = a 6-(N-acetyl-alpha-D-glucosaminyl)-1-(1,2-diacyl-sn-glycero-3-phospho)-1D-myo-inositol + UDP + H(+). It participates in glycolipid biosynthesis; glycosylphosphatidylinositol-anchor biosynthesis. In terms of biological role, part of the complex catalyzing the transfer of N-acetylglucosamine from UDP-N-acetylglucosamine to phosphatidylinositol, the first step of GPI biosynthesis. This Schizosaccharomyces pombe (strain 972 / ATCC 24843) (Fission yeast) protein is Phosphatidylinositol N-acetylglucosaminyltransferase GPI2 subunit (gpi2).